The chain runs to 303 residues: MTLTPSPTDALHGWIILDKQEGLGSTQAVSAVKRAIRIAGLPKVKVGHGGTLDPLASGVLPVALGEATKLAGYALNSDKVYAFTLAFGAETDSLDREGSITAQSDKRPTREEVESVLSCFRGEIHQIPPVYSALKINGKRACDRVRAGETVTVKGRDITIHELTLDDFSPDQATFIAKVSKGTYIRSLARDIAHKLNCYGHVSYLRRLKSGPFTSEQAISLDKLMEMAQAGKLYQMLLPLTAGLDDIPALAVSSDQAKALRQGQKLIGINAESGLNMAMESQIPVALIEVTGQEARVLRGFNF.

Asp53 (nucleophile) is an active-site residue.

It belongs to the pseudouridine synthase TruB family. Type 1 subfamily.

The enzyme catalyses uridine(55) in tRNA = pseudouridine(55) in tRNA. Functionally, responsible for synthesis of pseudouridine from uracil-55 in the psi GC loop of transfer RNAs. In Zymomonas mobilis subsp. mobilis (strain ATCC 31821 / ZM4 / CP4), this protein is tRNA pseudouridine synthase B.